The primary structure comprises 142 residues: Natriuretic peptides A (142 aa).

Residues 1–23 (MMLKTVIYTGVLFLICNKVLVRA) form the signal peptide. Residues 24–112 (DPLYSPYSSK…RLRDLLMAPR (89 aa)) constitute a propeptide that is removed on maturation. The segment at 47–123 (DTLGQDEGND…NRGSSGCFGS (77 aa)) is disordered. Residues 77–94 (WDRERERQWPASDYKKPQ) show a composition bias toward basic and acidic residues. Cys120 and Cys136 are disulfide-bonded.

The protein belongs to the natriuretic peptide family. Cleaved upon secretion to produce the functional hormone. In terms of tissue distribution, expressed in heart atrium and to a lower extent in heart ventricle, but not in brain.

It is found in the secreted. Functionally, hormone playing a key role in cardiovascular homeostasis through regulation of natriuresis, diuresis, and vasodilation. Has a cGMP-stimulating activity. The sequence is that of Natriuretic peptides A (nppa) from Acipenser transmontanus (White sturgeon).